A 379-amino-acid chain; its full sequence is MKFFTALAAVGALLAPALALPTPASEEASHNQTLSVRLVPAGHTMVRAIVTNNGERPLHLLSFNTILDEDPTSKVEVFHESGDEAEFLGMLPRYDLSDLTEDLFTRLAPKDSVEHLFDIATVHDLKWDGKYTLAARGAIPVAEDGGTTIIDHVYYESNELDMEIDARKAAMVPRAFDDYFSKSLDKRRPLDICNPRKERDLRAALEGAQQVAKEAAAAAQNNTEKVFEFFRARDPGTRKEVSQHLSSISRAATKDGSSVTWFCSDGPGRCGPRTIAYTFPAKNEVHPCPLFWQMPHVNNKCHRQDRVGTVIHEGAHNPSVVTPYCKDLGYGYNRATGLTSQRAKRNADNYALFAMARQLVFCLLHLFVALPFIYIFASF.

A signal peptide spans 1-19 (MKFFTALAAVGALLAPALA). The propeptide occupies 20–187 (LPTPASEEAS…DYFSKSLDKR (168 aa)). 2 cysteine pairs are disulfide-bonded: Cys193/Cys263 and Cys270/Cys288. Residue Asn221 is glycosylated (N-linked (GlcNAc...) asparagine). Residue His312 coordinates Zn(2+). Residue Glu313 is part of the active site. Residues His316 and Asp327 each coordinate Zn(2+).

Belongs to the peptidase M35 family. Zn(2+) serves as cofactor.

The protein resides in the secreted. The enzyme catalyses Preferential cleavage of bonds with hydrophobic residues in P1'. Also 3-Asn-|-Gln-4 and 8-Gly-|-Ser-9 bonds in insulin B chain.. Its function is as follows. Secreted metalloproteinase that allows assimilation of proteinaceous substrates. Shows high activities on basic nuclear substrates such as histone and protamine. May be involved in virulence. The sequence is that of Neutral protease 2 homolog TRV_03208 from Trichophyton verrucosum (strain HKI 0517).